Consider the following 2185-residue polypeptide: DNA polymerase epsilon catalytic subunit A (2185 aa).

Residues cysteine 2072, cysteine 2075, cysteine 2094, and cysteine 2097 each contribute to the Zn(2+) site. The CysA-type zinc finger occupies 2072-2097; sequence CEHCSYISDIDICRESMERVFICQSC. [4Fe-4S] cluster is bound by residues cysteine 2128, cysteine 2131, cysteine 2143, and cysteine 2145. A CysB motif motif is present at residues 2128–2145; the sequence is CNKCHKIKEDAMSPYCPC.

This sequence belongs to the DNA polymerase type-B family. As to quaternary structure, heterotetramer. Consists of 4 subunits: POL2, DPB2, DPB3 and DPB4. It depends on [4Fe-4S] cluster as a cofactor.

The protein resides in the nucleus. It catalyses the reaction DNA(n) + a 2'-deoxyribonucleoside 5'-triphosphate = DNA(n+1) + diphosphate. DNA polymerase II participates in chromosomal DNA replication. The sequence is that of DNA polymerase epsilon catalytic subunit A (POL2) from Kluyveromyces lactis (strain ATCC 8585 / CBS 2359 / DSM 70799 / NBRC 1267 / NRRL Y-1140 / WM37) (Yeast).